A 69-amino-acid chain; its full sequence is Pantinin-1 (69 aa).

Residues 1 to 23 form the signal peptide; it reads MKTQFVILMITVILMQMLVQTEG. Val37 is subject to Valine amide. Positions 41–69 are excised as a propeptide; the sequence is GLNDRDQLDDLFDSDLSDADIKLLKEMFK.

Belongs to the non-disulfide-bridged peptide (NDBP) superfamily. Short antimicrobial peptide (group 4) family. As to expression, expressed by the venom gland.

It is found in the secreted. Its subcellular location is the target cell membrane. Functionally, amphipathic peptide that possesses relatively strong activities against Gram-positive bacteria and a fungus, but has very weak antimicrobial activities against Gram-negative bacteria. Also exhibits very low hemolytic activities against human erythrocytes (64 uM induce 21% of hemolysis). Minimal inhibitory concentration (MIC) are the following: 8 uM against S.aureus, 32 uM against B.magaterium, 32 uM against M.luteus, 28 uM against vancomycin-resistant Enterococci, 14 uM against methicillin-resistant S.aureus, 62 uM against E.coli, &gt;87 uM against P.putida, &gt;87 uM against K.oxytoca, 76 uM against E.cloacae, 72 uM against S.enterica and 16 uM against the fungus C.tropicalis. This Pandinus imperator (Emperor scorpion) protein is Pantinin-1.